Reading from the N-terminus, the 1249-residue chain is Cilia- and flagella-associated protein 57 (1249 aa).

WD repeat units lie at residues 105–148 (FQVQ…AIIK), 195–233 (GESS…WETS), 335–374 (SDKQ…ISKG), 386–425 (LHSA…LELY), 427–469 (EYQE…KEYS), 471–506 (RGCK…NINI), 509–548 (GHTG…RETE), and 635–674 (AHAG…GRGI). 2 coiled-coil regions span residues 690–1056 (KTDM…KTDL) and 1094–1165 (SDLQ…SALK).

The protein belongs to the CFAP57 family. As to quaternary structure, may form homodimers. Associates with components of the nexin-dynein regulatory complex (N-DRC) and the CFAP184:CFAP263 complex. As to expression, predominanly expressed in testis, lung and skin. Weak expression in brain and kidney.

It is found in the cytoplasm. It localises to the cytoskeleton. The protein localises to the cilium axoneme. Functionally, associates with components of the nexin-dynein regulatory complex (N-DRC), a key regulator of ciliary/flagellar motility, and might act as an inner dynein arm (IDA) hub or linkage. In Mus musculus (Mouse), this protein is Cilia- and flagella-associated protein 57.